Here is a 1466-residue protein sequence, read N- to C-terminus: ABC transporter G family member 10 (1466 aa).

The span at 23–45 (NTPQYENNNNNNNNTSGNESPNI) shows a compositional bias: low complexity. The tract at residues 23-47 (NTPQYENNNNNNNNTSGNESPNILN) is disordered. The region spanning 138-392 (VTIFNLFRPS…FLDLGFDCEP (255 aa)) is the ABC transporter 1 domain. The ABC transmembrane type-2 1 domain maps to 497–724 (WGDRFALISK…NGSTMSYQDQ (228 aa)). 6 consecutive transmembrane segments (helical) span residues 501–521 (FALISKYISIIVQTFVYASLF), 537–557 (AIYAAILFNAFVSAGELGLTF), 586–606 (IPLTAIQVTIFSVIVYFMYGL), 611–631 (GKFFIFLFTIFGSTLSMVAFF), 641–661 (LYVSQNILNVFILFMFTYGGY), and 767–787 (IITFLWWIFFVIINMIALELF). An ABC transporter 2 domain is found at 838-1082 (FTWNHIHYTV…LTSYFERNGV (245 aa)). 874–881 (GSSGAGKT) provides a ligand contact to ATP. Positions 1177 to 1399 (SYVYGIFTQA…LTCKEYFKPT (223 aa)) constitute an ABC transmembrane type-2 2 domain. A run of 6 helical transmembrane segments spans residues 1178-1198 (YVYGIFTQAAASGLIIGFTFW), 1214-1234 (IFEILFLGILYIFIAIPQFLI), 1253-1273 (FAISIVIVELPFVAVAGTICF), 1290-1310 (FYFYITFILFLFICVSLGQVV), 1319-1339 (LAQTILPLLLVMLFLFCGVLV), and 1440-1460 (YGILWAFFIFNIIMVVSFVYL).

The protein belongs to the ABC transporter superfamily. ABCG family. PDR (TC 3.A.1.205) subfamily.

The protein resides in the membrane. The polypeptide is ABC transporter G family member 10 (abcG10) (Dictyostelium discoideum (Social amoeba)).